A 357-amino-acid polypeptide reads, in one-letter code: MTLWVVKLGTSLLRGDTAATIEGYASGLAAAMRRGDQVVLVTSGAVGLGCQKLHLPKRPDTVVALQAAAATGQGYLMALYERAMAVHGLSVAQVLLTRSDLVDRRRYQNASGTLQQLLAWGVLPVINENDALSSAELRFGDNDTLSALVAAAVGAHQLLLLTDVDRLYSSDPRSDANAQPITDVHHPRDLKWLEAGAGDGGRWGTGGMTTKLAAARIATASGVTVHLADGRDPARLAGLLEGDRGGTVFHPHPEPLGNRRSWLAHVLVPEGELCLDQGACQALLHRGASLLLVGVTAVKGQFEANRPVLLRDPDGQELGRGLCTLNSNQVRQALSVVTDAEASPVVVHRDALVLQDR.

Lys-7 contacts ATP. 3 residues coordinate substrate: Ser-43, Asp-130, and Asn-142. ATP contacts are provided by residues 162 to 163 and 205 to 211; these read TD and TGGMTTK. One can recognise a PUA domain in the interval 270–341; that stretch reads EGELCLDQGA…QALSVVTDAE (72 aa).

It belongs to the glutamate 5-kinase family.

It is found in the cytoplasm. It catalyses the reaction L-glutamate + ATP = L-glutamyl 5-phosphate + ADP. The protein operates within amino-acid biosynthesis; L-proline biosynthesis; L-glutamate 5-semialdehyde from L-glutamate: step 1/2. Its function is as follows. Catalyzes the transfer of a phosphate group to glutamate to form L-glutamate 5-phosphate. The polypeptide is Glutamate 5-kinase (Synechococcus sp. (strain CC9902)).